The following is a 188-amino-acid chain: Pyridoxal 5'-phosphate synthase subunit PdxT (188 aa).

46–48 (GES) lines the L-glutamine pocket. The Nucleophile role is filled by Cys78. L-glutamine is bound by residues Arg105 and 134–135 (IR). Catalysis depends on charge relay system residues His170 and Glu172.

It belongs to the glutaminase PdxT/SNO family. In the presence of PdxS, forms a dodecamer of heterodimers. Only shows activity in the heterodimer.

It carries out the reaction aldehydo-D-ribose 5-phosphate + D-glyceraldehyde 3-phosphate + L-glutamine = pyridoxal 5'-phosphate + L-glutamate + phosphate + 3 H2O + H(+). The enzyme catalyses L-glutamine + H2O = L-glutamate + NH4(+). It participates in cofactor biosynthesis; pyridoxal 5'-phosphate biosynthesis. Its function is as follows. Catalyzes the hydrolysis of glutamine to glutamate and ammonia as part of the biosynthesis of pyridoxal 5'-phosphate. The resulting ammonia molecule is channeled to the active site of PdxS. The chain is Pyridoxal 5'-phosphate synthase subunit PdxT from Thermotoga petrophila (strain ATCC BAA-488 / DSM 13995 / JCM 10881 / RKU-1).